Consider the following 375-residue polypeptide: Dehydrodolichyl diphosphate synthase complex subunit NUS1 (375 aa).

Residues 1-28 show a composition bias toward basic and acidic residues; the sequence is MPTMIKKDDKAMEPPNEKPHRKIERDDV. Residues 1–48 are disordered; it reads MPTMIKKDDKAMEPPNEKPHRKIERDDVPESSNHIPPPESGVLKGGKV. The chain crosses the membrane as a helical span at residues 97 to 119; the sequence is YLFYKFLLVLLYICFGLFRYGQY.

Belongs to the UPP synthase family. As to quaternary structure, forms an active dehydrodolichyl diphosphate synthase complex with either SRT1 or RER2. Mg(2+) serves as cofactor.

The protein resides in the endoplasmic reticulum membrane. It is found in the lipid droplet. Its subcellular location is the nucleus membrane. It carries out the reaction n isopentenyl diphosphate + (2E,6E)-farnesyl diphosphate = a di-trans,poly-cis-polyprenyl diphosphate + n diphosphate. It functions in the pathway protein modification; protein glycosylation. Functionally, with SRT1 or RER2, forms the dehydrodolichyl diphosphate synthase (DDS) complex, an essential component of the dolichol monophosphate (Dol-P) biosynthetic machinery. Adds multiple copies of isopentenyl pyrophosphate (IPP) to farnesyl pyrophosphate (FPP) to produce dehydrodolichyl diphosphate (Dedol-PP), a precursor of dolichol which is utilized as a sugar carrier in protein glycosylation in the endoplasmic reticulum (ER). The protein is Dehydrodolichyl diphosphate synthase complex subunit NUS1 (NUS1) of Saccharomyces cerevisiae (strain ATCC 204508 / S288c) (Baker's yeast).